A 422-amino-acid chain; its full sequence is Imidazolonepropionase (422 aa).

Fe(3+) contacts are provided by His-82 and His-84. Zn(2+) is bound by residues His-82 and His-84. 3 residues coordinate 4-imidazolone-5-propanoate: Arg-91, Tyr-154, and His-187. An N-formimidoyl-L-glutamate-binding site is contributed by Tyr-154. His-252 contributes to the Fe(3+) binding site. His-252 serves as a coordination point for Zn(2+). 4-imidazolone-5-propanoate is bound at residue Glu-255. Asp-327 contributes to the Fe(3+) binding site. Asp-327 contributes to the Zn(2+) binding site. Residues Asn-329 and Gly-331 each coordinate N-formimidoyl-L-glutamate. Ser-332 lines the 4-imidazolone-5-propanoate pocket.

It belongs to the metallo-dependent hydrolases superfamily. HutI family. Requires Zn(2+) as cofactor. Fe(3+) is required as a cofactor.

Its subcellular location is the cytoplasm. It catalyses the reaction 4-imidazolone-5-propanoate + H2O = N-formimidoyl-L-glutamate. It functions in the pathway amino-acid degradation; L-histidine degradation into L-glutamate; N-formimidoyl-L-glutamate from L-histidine: step 3/3. Functionally, catalyzes the hydrolytic cleavage of the carbon-nitrogen bond in imidazolone-5-propanoate to yield N-formimidoyl-L-glutamate. It is the third step in the universal histidine degradation pathway. This Alkaliphilus oremlandii (strain OhILAs) (Clostridium oremlandii (strain OhILAs)) protein is Imidazolonepropionase.